We begin with the raw amino-acid sequence, 358 residues long: Ornithine cyclodeaminase (358 aa).

Residues arginine 52 and lysine 76 each contribute to the L-ornithine site. NAD(+)-binding positions include threonine 91, arginine 119, 146-147, aspartate 168, threonine 208, 231-234, lysine 238, and serine 299; these read AQ and VGGD. L-ornithine is bound at residue arginine 119. Aspartate 234 serves as a coordination point for L-ornithine. Aspartate 234 (proton donor/acceptor) is an active-site residue. Residue valine 300 coordinates L-ornithine.

This sequence belongs to the ornithine cyclodeaminase/mu-crystallin family. NAD(+) serves as cofactor.

It carries out the reaction L-ornithine = L-proline + NH4(+). Its pathway is amino-acid biosynthesis; L-proline biosynthesis; L-proline from L-ornithine: step 1/1. In terms of biological role, catalyzes the conversion of L-ornithine into L-proline with release of ammonia. The sequence is that of Ornithine cyclodeaminase from Brucella suis biovar 1 (strain 1330).